Reading from the N-terminus, the 57-residue chain is UPF0057 membrane protein T23F2.3 (57 aa).

The next 2 helical transmembrane spans lie at 4 to 24 (TCTD…GVFL) and 36 to 56 (ILLT…VILA).

It belongs to the UPF0057 (PMP3) family.

The protein resides in the membrane. This Caenorhabditis elegans protein is UPF0057 membrane protein T23F2.3.